Consider the following 440-residue polypeptide: Ribosomal protein uS12 methylthiotransferase RimO (440 aa).

The region spanning proline 8–proline 118 is the MTTase N-terminal domain. The [4Fe-4S] cluster site is built by cysteine 17, cysteine 53, cysteine 82, cysteine 149, cysteine 153, and cysteine 156. One can recognise a Radical SAM core domain in the interval leucine 135 to aspartate 372. Positions alanine 375–valine 440 constitute a TRAM domain.

Belongs to the methylthiotransferase family. RimO subfamily. It depends on [4Fe-4S] cluster as a cofactor.

The protein resides in the cytoplasm. The catalysed reaction is L-aspartate(89)-[ribosomal protein uS12]-hydrogen + (sulfur carrier)-SH + AH2 + 2 S-adenosyl-L-methionine = 3-methylsulfanyl-L-aspartate(89)-[ribosomal protein uS12]-hydrogen + (sulfur carrier)-H + 5'-deoxyadenosine + L-methionine + A + S-adenosyl-L-homocysteine + 2 H(+). Functionally, catalyzes the methylthiolation of an aspartic acid residue of ribosomal protein uS12. The chain is Ribosomal protein uS12 methylthiotransferase RimO from Dechloromonas aromatica (strain RCB).